Here is a 509-residue protein sequence, read N- to C-terminus: Monocarboxylate transporter 9 (509 aa).

Over 1-12 (MELKKSPDGGWG) the chain is Cytoplasmic. Helical transmembrane passes span 13–33 (WVIV…PLAV), 53–73 (WVGS…SLCV), 80–100 (PVTI…SFAP), 102–122 (IYFL…LLYT), 137–157 (GLAL…YAAL), 164–184 (FYGL…ILAC), 305–325 (VFSA…PPSL), 342–362 (IMPL…LLGI), 372–392 (LYLY…IPFA), 398–418 (LALL…FPYV), 433–453 (GILM…VGWF), and 462–482 (IAFY…LLAA). The Cytoplasmic portion of the chain corresponds to 483–509 (LPSWDTCNKQLPKPAPTTFLYKVASNV).

The protein belongs to the major facilitator superfamily. Monocarboxylate porter (TC 2.A.1.13) family.

The protein localises to the cell membrane. The catalysed reaction is creatine(in) = creatine(out). It carries out the reaction (R)-carnitine(in) = (R)-carnitine(out). Extracellular pH-and Na(+)-sensitive low-affinity creatine transporter. Also functions as a pH-independent carnitine efflux transporter. This is Monocarboxylate transporter 9 (SLC16A9) from Pongo abelii (Sumatran orangutan).